The chain runs to 312 residues: Glyoxylate/hydroxypyruvate reductase A (312 aa).

Residue arginine 227 is part of the active site. The Proton donor role is filled by histidine 275.

This sequence belongs to the D-isomer specific 2-hydroxyacid dehydrogenase family. GhrA subfamily.

It localises to the cytoplasm. The enzyme catalyses glycolate + NADP(+) = glyoxylate + NADPH + H(+). The catalysed reaction is (R)-glycerate + NAD(+) = 3-hydroxypyruvate + NADH + H(+). It catalyses the reaction (R)-glycerate + NADP(+) = 3-hydroxypyruvate + NADPH + H(+). Its function is as follows. Catalyzes the NADPH-dependent reduction of glyoxylate and hydroxypyruvate into glycolate and glycerate, respectively. This is Glyoxylate/hydroxypyruvate reductase A from Escherichia coli O157:H7.